The sequence spans 194 residues: MTLLLRLFTLGCLLLLAGCATTQPQRDQVNWQQERTRLEQLSHWQLSGKMAIITAQQKGSARVNWQQDGDDYRLNLTSLIGTHILELSRSKGEITLIDNEGNPHQSQDAEALIYQLTGWNIPVAGLPEWIKGLPGQAEFELNPDRSLASVRDGQWQIVYGDYRDQDGYRLPHLLTMTGQGSRLKLQINQWTITR.

The first 18 residues, 1 to 18 (MTLLLRLFTLGCLLLLAG), serve as a signal peptide directing secretion. Cys-19 is lipidated: N-palmitoyl cysteine. Cys-19 carries S-diacylglycerol cysteine lipidation.

The protein belongs to the LolB family. In terms of assembly, monomer.

The protein localises to the cell outer membrane. Its function is as follows. Plays a critical role in the incorporation of lipoproteins in the outer membrane after they are released by the LolA protein. This Aeromonas hydrophila subsp. hydrophila (strain ATCC 7966 / DSM 30187 / BCRC 13018 / CCUG 14551 / JCM 1027 / KCTC 2358 / NCIMB 9240 / NCTC 8049) protein is Outer-membrane lipoprotein LolB.